Here is a 362-residue protein sequence, read N- to C-terminus: MIIDRVEVETINSFSKLELFKEIYGLIWILPIFALLLGITIEVLVIVWLEREISASIQQRIGPEYAGPLGLLQAIADGTKLLLKEDILPSRGDIPLFSIGPSIAVISILLSFLVIPLGYRFVLADLSIGVFLWIAISSIAPIGLLMAGYSSNNKYSFLGGLRAAAQSISYEIPLTFCVLAISLLSNSLSTVDIVEAQSKYGFFGWNLWRQPIGFLVFLISSLAECERLPFDLPEAEEELVAGYQTEYSGIKYGLFYLVSYLNLLVSSLFVTVLYLGGWNFSIPYISFFGFFQMNKIIGILEMVIGIFITLTKAYLFLFISITIRWTLPRMRMDQLLNLGWKFLLPISLGNLLLTTSFQLVSL.

Helical transmembrane passes span 26–48, 97–119, 126–148, 163–185, 254–276, 296–318, and 338–360; these read LIWI…VIVW, FSIG…PLGY, LSIG…LMAG, AAAQ…SLLS, LFYL…LYLG, IIGI…LFLF, and LGWK…FQLV.

Belongs to the complex I subunit 1 family. In terms of assembly, NDH is composed of at least 16 different subunits, 5 of which are encoded in the nucleus.

The protein localises to the plastid. It is found in the chloroplast thylakoid membrane. The enzyme catalyses a plastoquinone + NADH + (n+1) H(+)(in) = a plastoquinol + NAD(+) + n H(+)(out). It carries out the reaction a plastoquinone + NADPH + (n+1) H(+)(in) = a plastoquinol + NADP(+) + n H(+)(out). Functionally, NDH shuttles electrons from NAD(P)H:plastoquinone, via FMN and iron-sulfur (Fe-S) centers, to quinones in the photosynthetic chain and possibly in a chloroplast respiratory chain. The immediate electron acceptor for the enzyme in this species is believed to be plastoquinone. Couples the redox reaction to proton translocation, and thus conserves the redox energy in a proton gradient. This is NAD(P)H-quinone oxidoreductase subunit 1, chloroplastic (ndhA) from Zea mays (Maize).